The chain runs to 411 residues: Citrate synthase (411 aa).

Active-site residues include His-304 and Asp-363.

This sequence belongs to the citrate synthase family.

The catalysed reaction is oxaloacetate + acetyl-CoA + H2O = citrate + CoA + H(+). The protein operates within carbohydrate metabolism; tricarboxylic acid cycle; isocitrate from oxaloacetate: step 1/2. The sequence is that of Citrate synthase (gltA) from Rickettsia helvetica.